A 339-amino-acid chain; its full sequence is Phenylalanine--tRNA ligase alpha subunit (339 aa).

Glu-254 provides a ligand contact to Mg(2+).

Belongs to the class-II aminoacyl-tRNA synthetase family. Phe-tRNA synthetase alpha subunit type 1 subfamily. Tetramer of two alpha and two beta subunits. It depends on Mg(2+) as a cofactor.

The protein resides in the cytoplasm. The catalysed reaction is tRNA(Phe) + L-phenylalanine + ATP = L-phenylalanyl-tRNA(Phe) + AMP + diphosphate + H(+). In Chlamydia pneumoniae (Chlamydophila pneumoniae), this protein is Phenylalanine--tRNA ligase alpha subunit (pheS).